Reading from the N-terminus, the 260-residue chain is NAD-capped RNA hydrolase NudC (260 aa).

2 residues coordinate substrate: lysine 25 and arginine 69. Positions 98 and 101 each coordinate Zn(2+). Residue glutamate 111 coordinates substrate. Zn(2+) is bound by residues cysteine 116 and cysteine 119. Substrate is bound at residue tyrosine 124. Residues 125–248 (PQIAPCVIVA…TVARRLIEDT (124 aa)) enclose the Nudix hydrolase domain. Residues alanine 158, glutamate 174, and glutamate 178 each contribute to the a divalent metal cation site. A Nudix box motif is present at residues 159–180 (GFVEVGETLEQAVSREVLEESN). 192 to 199 (QPWPFPHS) is a substrate binding site. Glutamate 219 is an a divalent metal cation binding site. Alanine 241 contributes to the substrate binding site.

The protein belongs to the Nudix hydrolase family. NudC subfamily. Homodimer. Mg(2+) is required as a cofactor. Requires Mn(2+) as cofactor. The cofactor is Zn(2+).

The catalysed reaction is a 5'-end NAD(+)-phospho-ribonucleoside in mRNA + H2O = a 5'-end phospho-adenosine-phospho-ribonucleoside in mRNA + beta-nicotinamide D-ribonucleotide + 2 H(+). It catalyses the reaction NAD(+) + H2O = beta-nicotinamide D-ribonucleotide + AMP + 2 H(+). It carries out the reaction NADH + H2O = reduced beta-nicotinamide D-ribonucleotide + AMP + 2 H(+). Functionally, mRNA decapping enzyme that specifically removes the nicotinamide adenine dinucleotide (NAD) cap from a subset of mRNAs by hydrolyzing the diphosphate linkage to produce nicotinamide mononucleotide (NMN) and 5' monophosphate mRNA. The NAD-cap is present at the 5'-end of some mRNAs and stabilizes RNA against 5'-processing. Has preference for mRNAs with a 5'-end purine. Catalyzes the hydrolysis of a broad range of dinucleotide pyrophosphates. This Yersinia pseudotuberculosis serotype O:1b (strain IP 31758) protein is NAD-capped RNA hydrolase NudC.